The following is a 178-amino-acid chain: ATP-dependent protease subunit HslV (178 aa).

T7 is a catalytic residue. The Na(+) site is built by G162, C165, and T168.

The protein belongs to the peptidase T1B family. HslV subfamily. As to quaternary structure, a double ring-shaped homohexamer of HslV is capped on each side by a ring-shaped HslU homohexamer. The assembly of the HslU/HslV complex is dependent on binding of ATP.

Its subcellular location is the cytoplasm. It carries out the reaction ATP-dependent cleavage of peptide bonds with broad specificity.. With respect to regulation, allosterically activated by HslU binding. Its function is as follows. Protease subunit of a proteasome-like degradation complex believed to be a general protein degrading machinery. This chain is ATP-dependent protease subunit HslV, found in Cupriavidus metallidurans (strain ATCC 43123 / DSM 2839 / NBRC 102507 / CH34) (Ralstonia metallidurans).